The chain runs to 174 residues: tRNA (cytidine(56)-2'-O)-methyltransferase (174 aa).

S-adenosyl-L-methionine is bound by residues leucine 83, 108–112 (GAEKV), and 126–133 (VGNQPHSE).

It belongs to the aTrm56 family. Homodimer.

It is found in the cytoplasm. The catalysed reaction is cytidine(56) in tRNA + S-adenosyl-L-methionine = 2'-O-methylcytidine(56) in tRNA + S-adenosyl-L-homocysteine + H(+). Specifically catalyzes the AdoMet-dependent 2'-O-ribose methylation of cytidine at position 56 in tRNAs. This is tRNA (cytidine(56)-2'-O)-methyltransferase from Methanothrix thermoacetophila (strain DSM 6194 / JCM 14653 / NBRC 101360 / PT) (Methanosaeta thermophila).